Reading from the N-terminus, the 375-residue chain is Ketohexokinase (375 aa).

A beta-D-fructose-binding site is contributed by aspartate 319.

Belongs to the carbohydrate kinase PfkB family. As to quaternary structure, homodimer.

It catalyses the reaction beta-D-fructose + ATP = beta-D-fructose 1-phosphate + ADP + H(+). It functions in the pathway carbohydrate metabolism; fructose metabolism. With respect to regulation, activated in the presence of 0.5 M KCl. 85% activity at 3.5 M KCl. 60% activity without KCl. Functionally, catalyzes the ATP-dependent phosphorylation of the ketose sugar fructose to fructose-1-phosphate. Does not produce fructose-6-phosphate. The sugars D-glucose, D-galactose, L-rhamnose, D-xylose, L-arabinose and D-ribose are not substrates of this enzyme. The sequence is that of Ketohexokinase from Haloferax volcanii (strain ATCC 29605 / DSM 3757 / JCM 8879 / NBRC 14742 / NCIMB 2012 / VKM B-1768 / DS2) (Halobacterium volcanii).